The chain runs to 548 residues: CTP synthase (548 aa).

An amidoligase domain region spans residues 1–276; it reads MPTELTDYDP…DQYVMEQLGL (276 aa). Ser25 lines the CTP pocket. Position 25 (Ser25) interacts with UTP. ATP is bound at residue 26-31; that stretch reads GLGKGI. Tyr66 is an L-glutamine binding site. An ATP-binding site is contributed by Asp83. Residues Asp83 and Glu151 each contribute to the Mg(2+) site. Residues 158 to 160, 197 to 202, and Lys233 contribute to the CTP site; these read DIE and KTKPTQ. UTP is bound by residues 197 to 202 and Lys233; that span reads KTKPTQ. Residues 303-541 enclose the Glutamine amidotransferase type-1 domain; sequence DIALVGKYAM…VETILETTDT (239 aa). Residue Gly363 coordinates L-glutamine. Cys390 functions as the Nucleophile; for glutamine hydrolysis in the catalytic mechanism. Residues 391–394, Glu414, and Arg471 each bind L-glutamine; that span reads LGFQ. Catalysis depends on residues His514 and Glu516.

The protein belongs to the CTP synthase family. In terms of assembly, homotetramer.

It catalyses the reaction UTP + L-glutamine + ATP + H2O = CTP + L-glutamate + ADP + phosphate + 2 H(+). The enzyme catalyses L-glutamine + H2O = L-glutamate + NH4(+). It carries out the reaction UTP + NH4(+) + ATP = CTP + ADP + phosphate + 2 H(+). Its pathway is pyrimidine metabolism; CTP biosynthesis via de novo pathway; CTP from UDP: step 2/2. Allosterically activated by GTP, when glutamine is the substrate; GTP has no effect on the reaction when ammonia is the substrate. The allosteric effector GTP functions by stabilizing the protein conformation that binds the tetrahedral intermediate(s) formed during glutamine hydrolysis. Inhibited by the product CTP, via allosteric rather than competitive inhibition. Functionally, catalyzes the ATP-dependent amination of UTP to CTP with either L-glutamine or ammonia as the source of nitrogen. Regulates intracellular CTP levels through interactions with the four ribonucleotide triphosphates. This chain is CTP synthase, found in Natronomonas pharaonis (strain ATCC 35678 / DSM 2160 / CIP 103997 / JCM 8858 / NBRC 14720 / NCIMB 2260 / Gabara) (Halobacterium pharaonis).